Reading from the N-terminus, the 232-residue chain is 2,3,4,5-tetrahydropyridine-2,6-dicarboxylate N-acetyltransferase (232 aa).

This sequence belongs to the transferase hexapeptide repeat family. DapH subfamily.

It catalyses the reaction (S)-2,3,4,5-tetrahydrodipicolinate + acetyl-CoA + H2O = L-2-acetamido-6-oxoheptanedioate + CoA. It functions in the pathway amino-acid biosynthesis; L-lysine biosynthesis via DAP pathway; LL-2,6-diaminopimelate from (S)-tetrahydrodipicolinate (acetylase route): step 1/3. Functionally, catalyzes the transfer of an acetyl group from acetyl-CoA to tetrahydrodipicolinate. The polypeptide is 2,3,4,5-tetrahydropyridine-2,6-dicarboxylate N-acetyltransferase (Streptococcus pneumoniae serotype 4 (strain ATCC BAA-334 / TIGR4)).